Consider the following 341-residue polypeptide: Ribosomal RNA small subunit methyltransferase C (341 aa).

It belongs to the methyltransferase superfamily. RsmC family. In terms of assembly, monomer.

It is found in the cytoplasm. The catalysed reaction is guanosine(1207) in 16S rRNA + S-adenosyl-L-methionine = N(2)-methylguanosine(1207) in 16S rRNA + S-adenosyl-L-homocysteine + H(+). In terms of biological role, specifically methylates the guanine in position 1207 of 16S rRNA in the 30S particle. The protein is Ribosomal RNA small subunit methyltransferase C of Shewanella halifaxensis (strain HAW-EB4).